A 226-amino-acid chain; its full sequence is 3-isopropylmalate dehydratase small subunit (226 aa).

Positions 204-226 (EAETVESAREPEAVEWAGPLADR) are disordered.

This sequence belongs to the LeuD family. LeuD type 1 subfamily. Heterodimer of LeuC and LeuD.

It catalyses the reaction (2R,3S)-3-isopropylmalate = (2S)-2-isopropylmalate. It participates in amino-acid biosynthesis; L-leucine biosynthesis; L-leucine from 3-methyl-2-oxobutanoate: step 2/4. Its function is as follows. Catalyzes the isomerization between 2-isopropylmalate and 3-isopropylmalate, via the formation of 2-isopropylmaleate. The polypeptide is 3-isopropylmalate dehydratase small subunit (Bifidobacterium animalis subsp. lactis (strain AD011)).